Reading from the N-terminus, the 210-residue chain is Thymidylate kinase (210 aa).

10–17 (GPDGAGKT) is a binding site for ATP.

The protein belongs to the thymidylate kinase family.

The enzyme catalyses dTMP + ATP = dTDP + ADP. Its function is as follows. Phosphorylation of dTMP to form dTDP in both de novo and salvage pathways of dTTP synthesis. The protein is Thymidylate kinase of Geobacillus sp. (strain WCH70).